A 448-amino-acid chain; its full sequence is UPF0210 protein Pisl_0759 (448 aa).

It belongs to the UPF0210 family.

The sequence is that of UPF0210 protein Pisl_0759 from Pyrobaculum islandicum (strain DSM 4184 / JCM 9189 / GEO3).